Reading from the N-terminus, the 264-residue chain is Large ribosomal subunit protein mL50 (264 aa).

The N-terminal 75 residues, 1 to 75 (MSSLLKLHCI…EEGTNEASSQ (75 aa)), are a transit peptide targeting the mitochondrion.

The protein belongs to the mitochondrion-specific ribosomal protein mL50 family. As to quaternary structure, component of the mitochondrial large ribosomal subunit (mt-LSU). Mature yeast 74S mitochondrial ribosomes consist of a small (37S) and a large (54S) subunit. The 37S small subunit contains a 15S ribosomal RNA (15S mt-rRNA) and 34 different proteins. The 54S large subunit contains a 21S rRNA (21S mt-rRNA) and 46 different proteins.

It localises to the mitochondrion. Its function is as follows. Component of the mitochondrial ribosome (mitoribosome), a dedicated translation machinery responsible for the synthesis of mitochondrial genome-encoded proteins, including at least some of the essential transmembrane subunits of the mitochondrial respiratory chain. The mitoribosomes are attached to the mitochondrial inner membrane and translation products are cotranslationally integrated into the membrane. In Saccharomyces cerevisiae (strain ATCC 204508 / S288c) (Baker's yeast), this protein is Large ribosomal subunit protein mL50 (MRPL13).